Consider the following 1941-residue polypeptide: MAQGSGGREGALRTPAGGWHSPPSPDMQELLRSVERDLSIDPRQLAPAPGGTHVVALVPARWLASLRDRRLPLGPCPRAEGLGEAEVRTLLQRSVQRLPAGWTRVEVHGLRKRRLSYPLGGGLPFEDGSCGPETLTRFMQEVAAQNYRNLWRHAYHTYGQPYSHSPAPSAVPALDSVRQALQRVYGCSFLPVGETTQCPSYAREGPCPPRGSPACPSLLRAEALLESPEMLYVVHPYVQFSLHDVVTFSPAKLTNSQAKVLFILFRVLRAMDACHRQGLACGALSLYHIAVDEKLCSELRLDLSAYERPEEDENEEAPVARDEAGIVSQEEQGGQPGQPTGQEELRSLVLDWVHGRISNFHYLMQLNRLAGRRQGDPNYHPVLPWVVDFTTPHGRFRDLRKSKFRLNKGDKQLDFTYEMTRQAFVAGGAGGGEPPHVPHHISDVLSDITYYVYKARRTPRSVLCGHVRAQWEPHEYPASMERMQNWTPDECIPEFYTDPSIFRSIHPDMPDLDVPAWCSSSQEFVAAHRALLESREVSRDLHHWIDLTFGYKLQGKEAVKEKNVCLHLVDAHTHLASYGVVQLFDQPHPQRLAGAPALAPEPPLIPKLLVQTIQETTGREDFTENPGQLPNGVGRPVLEATPCEASWTRDRPVAGEDDLEQATEALDSISLAGKAGDQLGSSSQASPGLLSFSVASASRPGRRNKAAGADPGEGEEGRILLPEGFNPMQALEELEKTGNFLAKGLGGLLEVPEQPRVQPAVPLQCLLHRDMQALGVLLAEMVFATRVRTLQPDAPLWVRFQAVRGLCTRHPKEVPVSLQPVLDTLLQMSGPEVPMGAERGKLDQLFEYRPVSQGLPPPCPSQLLSPFSSVVPFPPYFPALHRFILLYQARRVEDEAQGRELVFALWQQLGAVLKDITPEGLEILLPFVLSLMSEEHTAVYTAWYLFEPVAKALGPKNANKYLLKPLIGAYESPCQLHGRFYLYTDCFVAQLMVRLGLQAFLTHLLPHVLQVLAGAEASQEESKDLAGAAEEEESGLPGAGPGSCAFGEEIPMDGEPPASSGLGLPDYTSGVSFHDQADLPETEDFQAGLYVTESPQPQEAEAVSLGRLSDKSSTSETSLGEERAPDEGGAPVDKSSLRSGDSSQDLKQSEGSEEEEEEEDSCVVLEEEEGEQEEVTGASELTLSDTVLSMETVVAGGSGGDGEEEEEALPEQSEGKEQKILLDTACKMVRWLSAKLGPTVASRHVARNLLRLLTSCYVGPTRQQFTVSSGESPPLSAGNIYQKRPVLGDIVSGPVLSCLLHIARLYGEPVLTYQYLPYISYLVAPGSASGPSRLNSRKEAGLLAAVTLTQKIIVYLSDTTLMDILPRISHEVLLPVLSFLTSLVTGFPSGAQARTILCVKTISLIALICLRIGQEMVQQHLSEPVATFFQVFSQLHELRQQDLKLDPAGRGEGQLPQVVFSDGQQRPVDPALLDELQKVFTLEMAYTIYVPFSCLLGDIIRKIIPNHELVGELAALYLESISPSSRNPASVEPTMPGTGPEWDPHGGGCPQDDGHSGTFGSVLVGNRIQIPNDSRPENPGPLGPISGVGGGGLGSGSDDNALKQELPRSVHGLSGNWLAYWQYEIGVSQQDAHFHFHQIRLQSFPGHSGAVKCVAPLSSEDFFLSGSKDRTVRLWPLYNYGDGTSETAPRLVYTQHRKSVFFVGQLEAPQHVVSCDGAVHVWDPFTGKTLRTVEPLDSRVPLTAVAVMPAPHTSITMASSDSTLRFVDCRKPGLQHEFRLGGGLNPGLVRALAISPSGRSVVAGFSSGFMVLLDTRTGLVLRGWPAHEGDILQIKAVEGSVLVSSSSDHSLTVWKELEQKPTHHYKSASDPIHTFDLYGSEVVTGTVSNKIGVCSLLEPPSQATTKLSSENFRGTLTSLALLPTKRHLLLGSDNGVIRLLA.

Residues 1–27 (MAQGSGGREGALRTPAGGWHSPPSPDM) form a disordered region. The tract at residues 1–650 (MAQGSGGREG…TPCEASWTRD (650 aa)) is necessary and sufficient for the interaction with SQSTM1. Residues 337–614 (GQPTGQEELR…IPKLLVQTIQ (278 aa)) form the BEACH domain. Disordered stretches follow at residues 618–637 (GRED…GRPV), 694–718 (VASA…EEGR), 1022–1074 (SKDL…VSFH), 1097–1217 (PQEA…EGKE), 1523–1556 (PSSR…DGHS), and 1569–1602 (QIPN…DNAL). Polar residues predominate over residues 1137-1146 (LRSGDSSQDL). The segment covering 1151–1174 (GSEEEEEEEDSCVVLEEEEGEQEE) has biased composition (acidic residues). Over residues 1586–1595 (SGVGGGGLGS) the composition is skewed to gly residues. WD repeat units lie at residues 1639–1677 (IRLQ…LWPL), 1686–1724 (ETAP…VWDP), 1729–1769 (TLRT…FVDC), 1777–1815 (EFRL…LLDT), 1819–1856 (LVLR…VWKE), 1860–1896 (KPTH…VCSL), and 1902–1941 (QATT…RLLA).

Belongs to the WD repeat WDR81 family. As to quaternary structure, interacts with WDR91; involved in early to late endosome cargo transport. Interacts with BECN1; negatively regulates the PI3 kinase/PI3K activity associated with endosomal membranes. Interacts with SQSTM1; the interaction is direct and regulates the interaction of SQSTM1 with ubiquitinated proteins. Interacts with MAP1LC3C; recruits MAP1LC3C to ubiquitinated protein aggregates in the aggrephagy process. In terms of tissue distribution, widely expressed. In the brain, highest levels in cerebellum and corpus callosum.

The protein resides in the early endosome membrane. Its subcellular location is the late endosome membrane. The protein localises to the lysosome membrane. It is found in the cytoplasmic vesicle. It localises to the autophagosome membrane. The protein resides in the mitochondrion. Its subcellular location is the cytoplasm. The protein localises to the cytosol. Functions as a negative regulator of the PI3 kinase/PI3K activity associated with endosomal membranes via BECN1, a core subunit of the PI3K complex. By modifying the phosphatidylinositol 3-phosphate/PtdInsP3 content of endosomal membranes may regulate endosome fusion, recycling, sorting and early to late endosome transport. It is for instance, required for the delivery of cargos like BST2/tetherin from early to late endosome and thereby participates indirectly to their degradation by the lysosome. May also play a role in aggrephagy, the macroautophagic degradation of ubiquitinated protein aggregates. In this process, may regulate the interaction of SQSTM1 with ubiquitinated proteins and also recruit MAP1LC3C. May also be involved in maintenance of normal mitochondrial structure and organization. The polypeptide is WD repeat-containing protein 81 (Homo sapiens (Human)).